Reading from the N-terminus, the 495-residue chain is Heat stress transcription factor A-1a (495 aa).

Residues 50 to 144 (PPPFLSKTYD…LLKKISRRKS (95 aa)) mediate DNA binding. The interval 140 to 164 (SRRKSVQGHGSSSSNPQSQQLSQGQ) is disordered. Over residues 146–164 (QGHGSSSSNPQSQQLSQGQ) the composition is skewed to low complexity. The hydrophobic repeat HR-A/B stretch occupies residues 172-238 (SCVEVGKFGL…QIMSFLAKAV (67 aa)). The tract at residues 255-288 (NMHVTEANKKRRLREDSTAATESNSHSHSLEASD) is disordered. The short motif at 262 to 268 (NKKRRLR) is the Nuclear localization signal element. Positions 272 to 281 (TAATESNSHS) are enriched in polar residues. The AHA signature appears at 433–442 (FEFLEEYMPE). A disordered region spans residues 445 to 477 (VFGDATTLENNNNNNNNNNNNNNNNNNNNTNGR). Low complexity predominate over residues 454–473 (NNNNNNNNNNNNNNNNNNNN). The Nuclear export signal motif lies at 482-489 (LIEELGLL).

This sequence belongs to the HSF family. Class A subfamily. Homotrimer. Interacts with HSP70-1 and HSP70-4. Binds to CRK1. Binds to HSBP. In terms of processing, exhibits temperature-dependent phosphorylation. Phosphorylated by CRK1. As to expression, constitutively expressed.

Its subcellular location is the cytoplasm. The protein resides in the nucleus. In terms of biological role, transcriptional activator that specifically binds DNA sequence 5'-AGAAnnTTCT-3' known as heat shock promoter elements (HSE). This chain is Heat stress transcription factor A-1a (HSFA1A), found in Arabidopsis thaliana (Mouse-ear cress).